Consider the following 282-residue polypeptide: Adenosylcobinamide-GDP ribazoletransferase (282 aa).

The next 6 membrane-spanning stretches (helical) occupy residues 47–67, 72–92, 124–144, 167–187, 208–228, and 231–251; these read GVGILVGVMAALVYGLIQALL, FTPLVAAVLSTAATVLLTGGF, AFGAMALMLALLGKTALLAML, AALLTGHVVSRGLPLLLIWLL, GSLLVAFIWSFVVLALAGLAL, and ISLIVACSFSLLALLWMGALF.

The protein belongs to the CobS family. Mg(2+) serves as cofactor.

It is found in the cell inner membrane. The enzyme catalyses alpha-ribazole + adenosylcob(III)inamide-GDP = adenosylcob(III)alamin + GMP + H(+). The catalysed reaction is alpha-ribazole 5'-phosphate + adenosylcob(III)inamide-GDP = adenosylcob(III)alamin 5'-phosphate + GMP + H(+). The protein operates within cofactor biosynthesis; adenosylcobalamin biosynthesis; adenosylcobalamin from cob(II)yrinate a,c-diamide: step 7/7. In terms of biological role, joins adenosylcobinamide-GDP and alpha-ribazole to generate adenosylcobalamin (Ado-cobalamin). Also synthesizes adenosylcobalamin 5'-phosphate from adenosylcobinamide-GDP and alpha-ribazole 5'-phosphate. This chain is Adenosylcobinamide-GDP ribazoletransferase, found in Polaromonas sp. (strain JS666 / ATCC BAA-500).